Reading from the N-terminus, the 133-residue chain is MSVEASILVLVGGFIGGVMRFFLSGYVGRRIGETFPWGTFVVNVSGAFVIGTAAGLGARLGAIFSTTIFHEFIMVGLLGGYTTVSSFCLQSVNLMLDGEQRQALFNIVASALLCVLAVAAGYGGIMWIMEWPG.

A run of 3 helical transmembrane segments spans residues 7–27 (ILVL…SGYV), 37–57 (WGTF…AGLG), and 60–80 (LGAI…LLGG). The Na(+) site is built by glycine 79 and threonine 82. Residues 107–127 (IVASALLCVLAVAAGYGGIMW) traverse the membrane as a helical segment.

Belongs to the fluoride channel Fluc/FEX (TC 1.A.43) family.

It localises to the cell inner membrane. It carries out the reaction fluoride(in) = fluoride(out). Na(+) is not transported, but it plays an essential structural role and its presence is essential for fluoride channel function. Its function is as follows. Fluoride-specific ion channel. Important for reducing fluoride concentration in the cell, thus reducing its toxicity. In Brucella suis biovar 1 (strain 1330), this protein is Fluoride-specific ion channel FluC 3.